Here is a 336-residue protein sequence, read N- to C-terminus: MEENMNLKYLLLFVYFVQVLNCCYGHGDPLSYELDRGPKCPFNSDTVSIIIETRENRNRDLYTLQTLQNHPEFKKKTITRPVVFITHGFTSSASETNFINLAKALVDKDNYMVISIDWQTAACTNEAAGLKYLYYPTAARNTRLVGQYIATITQKLVKHYKISMANIRLIGHSLGAHASGFAGKKVQELKLGKYSEIIGLDPARPSFDSNHCSERLCETDAEYVQIIHTSNYLGTEKTLGTVDFYMNNGKNQPGCGRFFSEVCSHSRAVIYMAECIKHECCLIGIPKSKSSQPISSCTKQECVCVGLNAKKYPSRGSFYVPVESTAPFCNNKGKII.

The first 27 residues, 1–27 (MEENMNLKYLLLFVYFVQVLNCCYGHG), serve as a signal peptide directing secretion. Positions 28–36 (DPLSYELDR) are excised as a propeptide. Cys-40 and Cys-123 form a disulfide bridge. The Nucleophile role is filled by Ser-173. Asp-201 (charge relay system) is an active-site residue. Intrachain disulfides connect Cys-212–Cys-217 and Cys-255–Cys-263. His-265 acts as the Charge relay system in catalysis. Intrachain disulfides connect Cys-280-Cys-304, Cys-281-Cys-329, and Cys-297-Cys-302.

It belongs to the AB hydrolase superfamily. Lipase family. In terms of tissue distribution, expressed by the venom gland.

It localises to the secreted. It carries out the reaction a 1,2-diacyl-sn-glycero-3-phosphocholine + H2O = a 2-acyl-sn-glycero-3-phosphocholine + a fatty acid + H(+). Catalyzes the hydrolysis of phosphatidylcholine with phospholipase A1 activity. Induces hemolytic activity. Acts as an allergen. This Vespula vulgaris (Yellow jacket) protein is Phospholipase A1.